The primary structure comprises 228 residues: Ribonuclease 3 (228 aa).

The region spanning 5–134 (RSKLEKDYGI…FLGALLLDKG (130 aa)) is the RNase III domain. Glu-47 contributes to the Mg(2+) binding site. The active site involves Asp-51. 2 residues coordinate Mg(2+): Asp-120 and Glu-123. Glu-123 is an active-site residue. Residues 160–228 (DYKTSLQELL…AAKNALATLQ (69 aa)) form the DRBM domain.

The protein belongs to the ribonuclease III family. In terms of assembly, homodimer. The cofactor is Mg(2+).

Its subcellular location is the cytoplasm. It catalyses the reaction Endonucleolytic cleavage to 5'-phosphomonoester.. In terms of biological role, digests double-stranded RNA. Involved in the processing of primary rRNA transcript to yield the immediate precursors to the large and small rRNAs (23S and 16S). Processes some mRNAs, and tRNAs when they are encoded in the rRNA operon. Processes pre-crRNA and tracrRNA of type II CRISPR loci if present in the organism. The polypeptide is Ribonuclease 3 (Streptococcus agalactiae serotype III (strain NEM316)).